The primary structure comprises 344 residues: MAQKENTYPWPYGRQTAQSGLNILPQRVLRKEAVTPSALVLMSRSNTQPTAAPGQKVVENSSGTPNFSTRSFTIDDFEIGRPLGKGKFGNVYLAREKKSHFIVALKVLFKSQIEKEGVEHQLRREIEIQAHLQHPNILRLYNYFYDRRRIYLILEYAPRGELYKELQKCRTFDEQRTATIMEELADALIYCHGKKVIHRDIKPENLLLGLQGELKIADFGWSVHAPSLRRKTMCGTLDYLPPEMIEGRTHNEKVDLWCIGVLCYELLVGNPPFESASHNETYRRIGKVDLKFPPSVPAGAQDLISKLLKHNPSDRLPLAQVSAHPWVRAHSRRVLPPSAPQSVP.

Thr35 is subject to Phosphothreonine. The residue at position 62 (Ser62) is a Phosphoserine. Phosphothreonine is present on Thr64. Positions 77 to 327 (FEIGRPLGKG…LAQVSAHPWV (251 aa)) constitute a Protein kinase domain. ATP-binding positions include 83–91 (LGKGKFGNV) and Lys106. The active-site Proton acceptor is the Asp200. An N6-acetyllysine modification is found at Lys215. Position 227 is a phosphoserine (Ser227). Position 232 is a phosphothreonine; by autocatalysis (Thr232).

It belongs to the protein kinase superfamily. Ser/Thr protein kinase family. Aurora subfamily. As to quaternary structure, component of the chromosomal passenger complex (CPC) composed of at least BIRC5/survivin, CDCA8/borealin, INCENP, AURKB or AURKC; predominantly independent AURKB- and AURKC-containing complexes exist. Associates with RACGAP1 during M phase. Interacts with SPDYC; this interaction may be required for proper localization of active, Thr-232-phosphorylated AURKB form during prometaphase and metaphase. Interacts with p53/TP53. Interacts (via the middle kinase domain) with NOC2L (via the N- and C-terminus domains). Interacts with CDCA1. Interacts with EVI5. Interacts with JTB. Interacts with NDC80. Interacts with PSMA3. Interacts with RNF2/RING1B. Interacts with SEPTIN1. Interacts with SIRT2. Interacts with TACC1. Interacts with TTC28. In terms of processing, the phosphorylation of Thr-232 requires the binding to INCENP and occurs by means of an autophosphorylation mechanism. Thr-232 phosphorylation is indispensable for the AURKB kinase activity. Acetylated at Lys-215 by KAT5 at kinetochores, increasing AURKB activity and promoting accurate chromosome segregation in mitosis. Post-translationally, ubiquitinated by different BCR (BTB-CUL3-RBX1) E3 ubiquitin ligase complexes. Ubiquitinated by the BCR(KLHL9-KLHL13) E3 ubiquitin ligase complex, ubiquitination leads to removal from mitotic chromosomes and is required for cytokinesis. During anaphase, the BCR(KLHL21) E3 ubiquitin ligase complex recruits the CPC complex from chromosomes to the spindle midzone and mediates the ubiquitination of AURKB. Ubiquitination of AURKB by BCR(KLHL21) E3 ubiquitin ligase complex may not lead to its degradation by the proteasome. Deubiquitinated by USP35; inhibiting CDH1-mediated degradation of AURKB.

It localises to the nucleus. Its subcellular location is the chromosome. It is found in the centromere. The protein resides in the kinetochore. The protein localises to the cytoplasm. It localises to the cytoskeleton. Its subcellular location is the spindle. It is found in the midbody. The enzyme catalyses L-seryl-[protein] + ATP = O-phospho-L-seryl-[protein] + ADP + H(+). It carries out the reaction L-threonyl-[protein] + ATP = O-phospho-L-threonyl-[protein] + ADP + H(+). Activity is greatly increased when AURKB is within the CPC complex. In particular, AURKB-phosphorylated INCENP acts as an activator of AURKB. Positive feedback between HASPIN and AURKB contributes to CPC localization. Its function is as follows. Serine/threonine-protein kinase component of the chromosomal passenger complex (CPC), a complex that acts as a key regulator of mitosis. The CPC complex has essential functions at the centromere in ensuring correct chromosome alignment and segregation and is required for chromatin-induced microtubule stabilization and spindle assembly. Involved in the bipolar attachment of spindle microtubules to kinetochores and is a key regulator for the onset of cytokinesis during mitosis. Required for central/midzone spindle assembly and cleavage furrow formation. Key component of the cytokinesis checkpoint, a process required to delay abscission to prevent both premature resolution of intercellular chromosome bridges and accumulation of DNA damage: phosphorylates CHMP4C, leading to retain abscission-competent VPS4 (VPS4A and/or VPS4B) at the midbody ring until abscission checkpoint signaling is terminated at late cytokinesis. AURKB phosphorylates the CPC complex subunits BIRC5/survivin, CDCA8/borealin and INCENP. Phosphorylation of INCENP leads to increased AURKB activity. Other known AURKB substrates involved in centromeric functions and mitosis are CENPA, DES/desmin, GPAF, KIF2C, NSUN2, RACGAP1, SEPTIN1, VIM/vimentin, HASPIN, and histone H3. A positive feedback loop involving HASPIN and AURKB contributes to localization of CPC to centromeres. Phosphorylation of VIM controls vimentin filament segregation in cytokinetic process, whereas histone H3 is phosphorylated at 'Ser-10' and 'Ser-28' during mitosis (H3S10ph and H3S28ph, respectively). AURKB is also required for kinetochore localization of BUB1 and SGO1. Phosphorylation of p53/TP53 negatively regulates its transcriptional activity. Key regulator of active promoters in resting B- and T-lymphocytes: acts by mediating phosphorylation of H3S28ph at active promoters in resting B-cells, inhibiting RNF2/RING1B-mediated ubiquitination of histone H2A and enhancing binding and activity of the USP16 deubiquitinase at transcribed genes. Acts as an inhibitor of CGAS during mitosis: catalyzes phosphorylation of the N-terminus of CGAS during the G2-M transition, blocking CGAS liquid phase separation and activation, and thereby preventing CGAS-induced autoimmunity. Phosphorylates KRT5 during anaphase and telophase. Phosphorylates ATXN10 which promotes phosphorylation of ATXN10 by PLK1 and may play a role in the regulation of cytokinesis and stimulating the proteasomal degradation of ATXN10. This Sus scrofa (Pig) protein is Aurora kinase B (AURKB).